The sequence spans 342 residues: S-adenosylmethionine:tRNA ribosyltransferase-isomerase (342 aa).

This sequence belongs to the QueA family. Monomer.

Its subcellular location is the cytoplasm. It catalyses the reaction 7-aminomethyl-7-carbaguanosine(34) in tRNA + S-adenosyl-L-methionine = epoxyqueuosine(34) in tRNA + adenine + L-methionine + 2 H(+). It participates in tRNA modification; tRNA-queuosine biosynthesis. Transfers and isomerizes the ribose moiety from AdoMet to the 7-aminomethyl group of 7-deazaguanine (preQ1-tRNA) to give epoxyqueuosine (oQ-tRNA). This is S-adenosylmethionine:tRNA ribosyltransferase-isomerase from Streptococcus pneumoniae serotype 19F (strain G54).